Reading from the N-terminus, the 124-residue chain is Small ribosomal subunit protein uS12 (124 aa).

Asp-89 is subject to 3-methylthioaspartic acid. The tract at residues 105–124 (QGVKNRKQARSRYGAKKEKS) is disordered. Residues 108–118 (KNRKQARSRYG) show a composition bias toward basic residues.

Belongs to the universal ribosomal protein uS12 family. In terms of assembly, part of the 30S ribosomal subunit. Contacts proteins S8 and S17. May interact with IF1 in the 30S initiation complex.

Its function is as follows. With S4 and S5 plays an important role in translational accuracy. In terms of biological role, interacts with and stabilizes bases of the 16S rRNA that are involved in tRNA selection in the A site and with the mRNA backbone. Located at the interface of the 30S and 50S subunits, it traverses the body of the 30S subunit contacting proteins on the other side and probably holding the rRNA structure together. The combined cluster of proteins S8, S12 and S17 appears to hold together the shoulder and platform of the 30S subunit. The sequence is that of Small ribosomal subunit protein uS12 from Mycobacteroides abscessus (strain ATCC 19977 / DSM 44196 / CCUG 20993 / CIP 104536 / JCM 13569 / NCTC 13031 / TMC 1543 / L948) (Mycobacterium abscessus).